The following is a 114-amino-acid chain: T cell receptor beta variable 27 (114 aa).

Residues methionine 1 to alanine 21 form the signal peptide. Positions glutamine 22–leucine 114 constitute an Ig-like domain. Cysteine 42 and cysteine 110 form a disulfide bridge. An N-linked (GlcNAc...) asparagine glycan is attached at asparagine 103.

Alpha-beta TR is a heterodimer composed of an alpha and beta chain; disulfide-linked. The alpha-beta TR is associated with the transmembrane signaling CD3 coreceptor proteins to form the TR-CD3 (TcR or TCR). The assembly of alpha-beta TR heterodimers with CD3 occurs in the endoplasmic reticulum where a single alpha-beta TR heterodimer associates with one CD3D-CD3E heterodimer, one CD3G-CD3E heterodimer and one CD247 homodimer forming a stable octameric structure. CD3D-CD3E and CD3G-CD3E heterodimers preferentially associate with TR alpha and TR beta chains, respectively. The association of the CD247 homodimer is the last step of TcR assembly in the endoplasmic reticulum and is required for transport to the cell surface.

The protein localises to the cell membrane. Its function is as follows. V region of the variable domain of T cell receptor (TR) beta chain that participates in the antigen recognition. Alpha-beta T cell receptors are antigen specific receptors which are essential to the immune response and are present on the cell surface of T lymphocytes. Recognize peptide-major histocompatibility (MH) (pMH) complexes that are displayed by antigen presenting cells (APC), a prerequisite for efficient T cell adaptive immunity against pathogens. Binding of alpha-beta TR to pMH complex initiates TR-CD3 clustering on the cell surface and intracellular activation of LCK that phosphorylates the ITAM motifs of CD3G, CD3D, CD3E and CD247 enabling the recruitment of ZAP70. In turn ZAP70 phosphorylates LAT, which recruits numerous signaling molecules to form the LAT signalosome. The LAT signalosome propagates signal branching to three major signaling pathways, the calcium, the mitogen-activated protein kinase (MAPK) kinase and the nuclear factor NF-kappa-B (NF-kB) pathways, leading to the mobilization of transcription factors that are critical for gene expression and essential for T cell growth and differentiation. The T cell repertoire is generated in the thymus, by V-(D)-J rearrangement. This repertoire is then shaped by intrathymic selection events to generate a peripheral T cell pool of self-MH restricted, non-autoaggressive T cells. Post-thymic interaction of alpha-beta TR with the pMH complexes shapes TR structural and functional avidity. In Homo sapiens (Human), this protein is T cell receptor beta variable 27.